Reading from the N-terminus, the 327-residue chain is Lipoyl synthase (327 aa).

Positions 74, 79, 85, 100, 104, 107, and 314 each coordinate [4Fe-4S] cluster. The region spanning 86–303 is the Radical SAM core domain; that stretch reads FSGGTATFMI…AEEGEKMGFK (218 aa).

Belongs to the radical SAM superfamily. Lipoyl synthase family. The cofactor is [4Fe-4S] cluster.

The protein resides in the cytoplasm. It carries out the reaction [[Fe-S] cluster scaffold protein carrying a second [4Fe-4S](2+) cluster] + N(6)-octanoyl-L-lysyl-[protein] + 2 oxidized [2Fe-2S]-[ferredoxin] + 2 S-adenosyl-L-methionine + 4 H(+) = [[Fe-S] cluster scaffold protein] + N(6)-[(R)-dihydrolipoyl]-L-lysyl-[protein] + 4 Fe(3+) + 2 hydrogen sulfide + 2 5'-deoxyadenosine + 2 L-methionine + 2 reduced [2Fe-2S]-[ferredoxin]. It participates in protein modification; protein lipoylation via endogenous pathway; protein N(6)-(lipoyl)lysine from octanoyl-[acyl-carrier-protein]: step 2/2. Functionally, catalyzes the radical-mediated insertion of two sulfur atoms into the C-6 and C-8 positions of the octanoyl moiety bound to the lipoyl domains of lipoate-dependent enzymes, thereby converting the octanoylated domains into lipoylated derivatives. The chain is Lipoyl synthase from Pseudomonas aeruginosa (strain LESB58).